Reading from the N-terminus, the 179-residue chain is Orotate phosphoribosyltransferase (179 aa).

5-phospho-alpha-D-ribose 1-diphosphate is bound by residues arginine 24, arginine 89, lysine 90, lysine 93, and 115–123 (EDVITTGGA). Positions 119 and 147 each coordinate orotate.

Belongs to the purine/pyrimidine phosphoribosyltransferase family. PyrE subfamily. Homodimer. Requires Mg(2+) as cofactor.

It carries out the reaction orotidine 5'-phosphate + diphosphate = orotate + 5-phospho-alpha-D-ribose 1-diphosphate. It participates in pyrimidine metabolism; UMP biosynthesis via de novo pathway; UMP from orotate: step 1/2. Functionally, catalyzes the transfer of a ribosyl phosphate group from 5-phosphoribose 1-diphosphate to orotate, leading to the formation of orotidine monophosphate (OMP). This chain is Orotate phosphoribosyltransferase, found in Nocardioides sp. (strain ATCC BAA-499 / JS614).